The sequence spans 388 residues: Bifunctional enzyme IspD/IspF (388 aa).

Positions 1-228 (MRIAALLLAA…GVIDRNLLPR (228 aa)) are 2-C-methyl-D-erythritol 4-phosphate cytidylyltransferase. Positions 228–388 (RVGLGYDVHA…SIMVPDNGEA (161 aa)) are 2-C-methyl-D-erythritol 2,4-cyclodiphosphate synthase. Residues aspartate 234 and histidine 236 each contribute to the a divalent metal cation site. Residues 234 to 236 (DVH) and 260 to 261 (HS) each bind 4-CDP-2-C-methyl-D-erythritol 2-phosphate. Histidine 268 serves as a coordination point for a divalent metal cation. Residues 282-284 (DIG), 358-361 (TTSE), phenylalanine 365, and arginine 368 contribute to the 4-CDP-2-C-methyl-D-erythritol 2-phosphate site.

The protein in the N-terminal section; belongs to the IspD/TarI cytidylyltransferase family. IspD subfamily. This sequence in the C-terminal section; belongs to the IspF family. The cofactor is a divalent metal cation.

It carries out the reaction 2-C-methyl-D-erythritol 4-phosphate + CTP + H(+) = 4-CDP-2-C-methyl-D-erythritol + diphosphate. The enzyme catalyses 4-CDP-2-C-methyl-D-erythritol 2-phosphate = 2-C-methyl-D-erythritol 2,4-cyclic diphosphate + CMP. The protein operates within isoprenoid biosynthesis; isopentenyl diphosphate biosynthesis via DXP pathway; isopentenyl diphosphate from 1-deoxy-D-xylulose 5-phosphate: step 2/6. It participates in isoprenoid biosynthesis; isopentenyl diphosphate biosynthesis via DXP pathway; isopentenyl diphosphate from 1-deoxy-D-xylulose 5-phosphate: step 4/6. In terms of biological role, bifunctional enzyme that catalyzes the formation of 4-diphosphocytidyl-2-C-methyl-D-erythritol from CTP and 2-C-methyl-D-erythritol 4-phosphate (MEP) (IspD), and catalyzes the conversion of 4-diphosphocytidyl-2-C-methyl-D-erythritol 2-phosphate (CDP-ME2P) to 2-C-methyl-D-erythritol 2,4-cyclodiphosphate (ME-CPP) with a corresponding release of cytidine 5-monophosphate (CMP) (IspF). In Gluconobacter oxydans (strain 621H) (Gluconobacter suboxydans), this protein is Bifunctional enzyme IspD/IspF.